The chain runs to 306 residues: tRNA pseudouridine synthase B (306 aa).

Asp-43 acts as the Nucleophile in catalysis.

Belongs to the pseudouridine synthase TruB family. Type 1 subfamily.

The enzyme catalyses uridine(55) in tRNA = pseudouridine(55) in tRNA. Functionally, responsible for synthesis of pseudouridine from uracil-55 in the psi GC loop of transfer RNAs. The chain is tRNA pseudouridine synthase B from Anaplasma marginale (strain St. Maries).